An 81-amino-acid chain; its full sequence is Small ribosomal subunit protein bS20 (81 aa).

A compositionally biased stretch (basic residues) spans 1–11 (MPNIKSQKKRV). The disordered stretch occupies residues 1-20 (MPNIKSQKKRVLTNEKSRAS).

This sequence belongs to the bacterial ribosomal protein bS20 family.

In terms of biological role, binds directly to 16S ribosomal RNA. In Mesoplasma florum (strain ATCC 33453 / NBRC 100688 / NCTC 11704 / L1) (Acholeplasma florum), this protein is Small ribosomal subunit protein bS20.